Reading from the N-terminus, the 256-residue chain is 1-(5-phosphoribosyl)-5-[(5-phosphoribosylamino)methylideneamino] imidazole-4-carboxamide isomerase (256 aa).

D8 acts as the Proton acceptor in catalysis. The active-site Proton donor is the D129.

Belongs to the HisA/HisF family.

It localises to the cytoplasm. The catalysed reaction is 1-(5-phospho-beta-D-ribosyl)-5-[(5-phospho-beta-D-ribosylamino)methylideneamino]imidazole-4-carboxamide = 5-[(5-phospho-1-deoxy-D-ribulos-1-ylimino)methylamino]-1-(5-phospho-beta-D-ribosyl)imidazole-4-carboxamide. It participates in amino-acid biosynthesis; L-histidine biosynthesis; L-histidine from 5-phospho-alpha-D-ribose 1-diphosphate: step 4/9. The chain is 1-(5-phosphoribosyl)-5-[(5-phosphoribosylamino)methylideneamino] imidazole-4-carboxamide isomerase from Picosynechococcus sp. (strain ATCC 27264 / PCC 7002 / PR-6) (Agmenellum quadruplicatum).